The sequence spans 243 residues: Probable phosphatase CLI_3563 (243 aa).

The Zn(2+) site is built by H8, H10, H16, H41, E74, H102, H132, D192, and H194.

This sequence belongs to the PHP family. Zn(2+) is required as a cofactor.

The polypeptide is Probable phosphatase CLI_3563 (Clostridium botulinum (strain Langeland / NCTC 10281 / Type F)).